The following is a 365-amino-acid chain: Alanine racemase (365 aa).

Lysine 32 functions as the Proton acceptor; specific for D-alanine in the catalytic mechanism. N6-(pyridoxal phosphate)lysine is present on lysine 32. Arginine 128 is a substrate binding site. Catalysis depends on tyrosine 257, which acts as the Proton acceptor; specific for L-alanine. Methionine 305 lines the substrate pocket.

The protein belongs to the alanine racemase family. It depends on pyridoxal 5'-phosphate as a cofactor.

The catalysed reaction is L-alanine = D-alanine. Its pathway is amino-acid biosynthesis; D-alanine biosynthesis; D-alanine from L-alanine: step 1/1. Functionally, catalyzes the interconversion of L-alanine and D-alanine. May also act on other amino acids. This chain is Alanine racemase (alr), found in Francisella tularensis subsp. novicida (strain U112).